The sequence spans 114 residues: Large ribosomal subunit protein bL19 (114 aa).

Belongs to the bacterial ribosomal protein bL19 family.

Its function is as follows. This protein is located at the 30S-50S ribosomal subunit interface and may play a role in the structure and function of the aminoacyl-tRNA binding site. The polypeptide is Large ribosomal subunit protein bL19 (Acidithiobacillus ferrooxidans (strain ATCC 23270 / DSM 14882 / CIP 104768 / NCIMB 8455) (Ferrobacillus ferrooxidans (strain ATCC 23270))).